A 291-amino-acid chain; its full sequence is 4-diphosphocytidyl-2-C-methyl-D-erythritol kinase (291 aa).

Residue K19 is part of the active site. Position 102 to 112 (102 to 112) interacts with ATP; sequence PMGGGIGGGSS. D144 is a catalytic residue.

The protein belongs to the GHMP kinase family. IspE subfamily.

It carries out the reaction 4-CDP-2-C-methyl-D-erythritol + ATP = 4-CDP-2-C-methyl-D-erythritol 2-phosphate + ADP + H(+). It participates in isoprenoid biosynthesis; isopentenyl diphosphate biosynthesis via DXP pathway; isopentenyl diphosphate from 1-deoxy-D-xylulose 5-phosphate: step 3/6. Its function is as follows. Catalyzes the phosphorylation of the position 2 hydroxy group of 4-diphosphocytidyl-2C-methyl-D-erythritol. The chain is 4-diphosphocytidyl-2-C-methyl-D-erythritol kinase from Ectopseudomonas mendocina (strain ymp) (Pseudomonas mendocina).